The following is a 174-amino-acid chain: Dual-action ribosomal maturation protein DarP (174 aa).

It belongs to the DarP family.

Its subcellular location is the cytoplasm. Functionally, member of a network of 50S ribosomal subunit biogenesis factors which assembles along the 30S-50S interface, preventing incorrect 23S rRNA structures from forming. Promotes peptidyl transferase center (PTC) maturation. This chain is Dual-action ribosomal maturation protein DarP, found in Vibrio atlanticus (strain LGP32) (Vibrio splendidus (strain Mel32)).